We begin with the raw amino-acid sequence, 430 residues long: Small ribosomal subunit protein uS5m (430 aa).

Residues 108 to 128 (AGARKGRGKRTKRKRRKDLNR) are disordered. Positions 111–125 (RKGRGKRTKRKRRKD) are enriched in basic residues. An S5 DRBM domain is found at 218-282 (FDTRILEVRN…NRAVHYLHYI (65 aa)).

Belongs to the universal ribosomal protein uS5 family. In terms of assembly, component of the mitochondrial ribosome small subunit (28S) which comprises a 12S rRNA and about 30 distinct proteins.

Its subcellular location is the mitochondrion. This Bos taurus (Bovine) protein is Small ribosomal subunit protein uS5m (MRPS5).